The following is a 311-amino-acid chain: Formimidoylglutamase (311 aa).

Mn(2+)-binding residues include His130, Asp155, His157, Asp159, Cys242, and Asp244.

Belongs to the arginase family. Requires Mn(2+) as cofactor.

It carries out the reaction N-formimidoyl-L-glutamate + H2O = formamide + L-glutamate. It functions in the pathway amino-acid degradation; L-histidine degradation into L-glutamate; L-glutamate from N-formimidoyl-L-glutamate (hydrolase route): step 1/1. Functionally, catalyzes the conversion of N-formimidoyl-L-glutamate to L-glutamate and formamide. In Staphylococcus aureus (strain Mu3 / ATCC 700698), this protein is Formimidoylglutamase.